Reading from the N-terminus, the 95-residue chain is Small ribosomal subunit protein bS21 (95 aa).

The segment at 56–95 (KLARKKMQREGLLPMKPKPVFGAGPGAGRGGPAAGPRGPR) is disordered. Gly residues predominate over residues 78–88 (AGPGAGRGGPA).

Belongs to the bacterial ribosomal protein bS21 family.

This Nitrobacter winogradskyi (strain ATCC 25391 / DSM 10237 / CIP 104748 / NCIMB 11846 / Nb-255) protein is Small ribosomal subunit protein bS21.